The sequence spans 558 residues: Atlastin-1 (558 aa).

Residues 1-28 (MAKSRRDRNSWGGFSEKSSDWSSEEEEP) form a disordered region. The segment at 1–34 (MAKSRRDRNSWGGFSEKSSDWSSEEEEPVRKAGP) is N-terminal hypervariable region (HVR). Residues 1–449 (MAKSRRDRNS…NIFHAARTPA (449 aa)) lie on the Cytoplasmic side of the membrane. Phosphoserine is present on residues S10, S22, and S23. Residues 64-309 (DKEVVAVSVA…LIPWLLSPER (246 aa)) form the GB1/RHD3-type G domain. GDP-binding residues include R77, K78, G79, K80, S81, F82, Q148, R217, D218, V276, and N279. Residues R77, K78, G79, K80, S81, and F82 each coordinate GTP. A Mg(2+)-binding site is contributed by S81. 3 residues coordinate GTP: R217, D218, and V276. A 3HB (three-helix bundle) domain region spans residues 347 to 438 (MLQATAEANN…YIQYIKHNDS (92 aa)). K395 bears the N6-acetyllysine mark. Residues 412 to 439 (EFSRRYLQQLESEIDELYIQYIKHNDSK) are a coiled coil. The interval 439-447 (KNIFHAART) is linker. Residues 450–470 (TLFVVIFITYVIAGVTGFIGL) traverse the membrane as a helical segment. Position 471 (D471) is a topological domain, lumenal. Residues 472–492 (IIASLCNMIMGLTLITLCTWA) form a helical membrane-spanning segment. The Cytoplasmic portion of the chain corresponds to 493–558 (YIRYSGEYRE…PTQQPEKKKI (66 aa)). An autoinhibitory domain region spans residues 521–558 (NEALYKLYSAAATHRHLCHQAFPAPKSEPTQQPEKKKI).

The protein belongs to the TRAFAC class dynamin-like GTPase superfamily. GB1/RHD3 GTPase family. GB1 subfamily. Monomeric and homodimeric. The homodimer, transiently formed by two molecules on opposing membranes, is the active form mediating ER membrane fusion. Interacts with REEP1, REEP5, RTN3 and RTN4 (via the transmembrane region); these proteins are involved in endoplasmic reticulum tubular network organization. Interacts with ZFYVE27; both proteins are involved in endoplasmic reticulum tubular network organization. Interacts with ARL6IP1; both proteins are involved in endoplasmic reticulum tubular network organization. Interacts with SPAST; the interaction is direct, could recruit SPAST to Golgi membranes. Interacts (via N-terminal region) with MAP4K4 (via CNH regulatory domain). May interact with TMED2. Interacts with CPT1C. Post-translationally, phosphorylated. Phosphorylation, by different kinases, of the N-terminal hypervariable region (HVR) regulates the ATL1-mediated membrane tethering step.

The protein resides in the endoplasmic reticulum membrane. The protein localises to the golgi apparatus membrane. Its subcellular location is the cell projection. It is found in the axon. It catalyses the reaction GTP + H2O = GDP + phosphate + H(+). Its function is as follows. Atlastin-1 (ATL1) is a membrane-anchored GTPase that mediates the GTP-dependent fusion of endoplasmic reticulum (ER) membranes, maintaining the continuous ER network. It facilitates the formation of three-way junctions where ER tubules intersect. Two atlastin-1 on neighboring ER tubules bind GTP and form loose homodimers through the GB1/RHD3-type G domains and 3HB regions. Upon GTP hydrolysis, the 3HB regions tighten, pulling the membranes together to drive their fusion. After fusion, the homodimer disassembles upon release of inorganic phosphate (Pi). Subsequently, GDP dissociates, resetting the monomers to a conformation ready for a new fusion cycle. May also regulate more or less directly Golgi biogenesis. Indirectly regulates axonal development. In Mus musculus (Mouse), this protein is Atlastin-1.